The following is a 297-amino-acid chain: Polyketide transferase ATR5 (297 aa).

The interval 49–272 (DVAVWFQKRG…FVLAENKGHM (224 aa)) is abhydrolase domain.

Belongs to the polyketide transferase af380 family.

It participates in mycotoxin biosynthesis. Functionally, polyketide transferase; part of the core atranone cluster (CAC) which products are predicted to catalyze most or all steps of atranone synthesis, starting from geranylgeranyl pyrophosphate (GGPP). The initial cyclization of GGPP to dolabellane is probably performed by the terpene cyclase ATR13. The Baeyer-Villiger oxidation near the end of the atranone synthesis, which converts atranones D and E to atranones F and G is predicted to be catalyzed by the monooxygenase ATR8. Of the CAC's other predicted gene products, the reducing PKS ATR6 might synthesize a polyketide chain. This polyketide is probably transferred onto the atranone backbone by the polyketide transferase ATR5. Other predicted CAC products include 4 oxygenases (ATR2, ATR3, ATR4, and ATR14), 3 short-chain reductases (ATR7, ATR9, and ATR10), and a methyltransferase (ATR12). These may all be involved in the various steps of atranone biosynthesis, although their specific roles must await experimental determination. The chain is Polyketide transferase ATR5 from Stachybotrys chlorohalonatus (strain IBT 40285).